The following is a 332-amino-acid chain: Ubiquinol oxidase 1a, mitochondrial (332 aa).

A mitochondrion-targeting transit peptide spans 1 to 54 (MSSRMAGSAILRHVGGVRLFTASATSPAAAAAAAARPFLAGGEAVPGVWGLRLM). A helical membrane pass occupies residues 157-177 (AMMLETVAAVPGMVGGMLLHL). Positions 161, 200, and 203 each coordinate Fe cation. Residues 219 to 239 (ALVITVQGVFFNAYFLGYLLS) form a helical membrane-spanning segment. Fe cation is bound by residues glutamate 251, glutamate 302, and histidine 305.

This sequence belongs to the alternative oxidase family. Homodimer; disulfide-linked. It depends on Fe cation as a cofactor. As to expression, expressed in roots, leaf sheaths and leaf blades.

It is found in the mitochondrion inner membrane. The catalysed reaction is 2 a ubiquinol + O2 = 2 a ubiquinone + 2 H2O. In terms of biological role, catalyzes the cyanide-resistant oxidation of ubiquinol and the reduction of molecular oxygen to water, but does not translocate protons and consequently is not linked to oxidative phosphorylation. May increase respiration when the cytochrome respiratory pathway is restricted, or in response to low temperatures. In Oryza sativa subsp. japonica (Rice), this protein is Ubiquinol oxidase 1a, mitochondrial.